Here is a 363-residue protein sequence, read N- to C-terminus: Aminomethyltransferase (363 aa).

The protein belongs to the GcvT family. In terms of assembly, the glycine cleavage system is composed of four proteins: P, T, L and H.

It catalyses the reaction N(6)-[(R)-S(8)-aminomethyldihydrolipoyl]-L-lysyl-[protein] + (6S)-5,6,7,8-tetrahydrofolate = N(6)-[(R)-dihydrolipoyl]-L-lysyl-[protein] + (6R)-5,10-methylene-5,6,7,8-tetrahydrofolate + NH4(+). Its function is as follows. The glycine cleavage system catalyzes the degradation of glycine. The polypeptide is Aminomethyltransferase (Staphylococcus saprophyticus subsp. saprophyticus (strain ATCC 15305 / DSM 20229 / NCIMB 8711 / NCTC 7292 / S-41)).